The following is a 313-amino-acid chain: Protein EMSY-LIKE 2 (313 aa).

Positions 1–88 constitute an ENT domain; the sequence is MEAQIHILEQ…HQSLDVHPSP (88 aa). The stretch at 35-58 forms a coiled coil; the sequence is MTNLRKELRISDDENRQLLNNVHN. Disordered regions lie at residues 84 to 106 and 195 to 229; these read VHPS…YPSI and LNVG…REHL. Residues 206–219 show a composition bias toward basic residues; that stretch reads GNRRTLSHGGRGRG. Positions 267-293 form a coiled coil; the sequence is HELDKAKKLLKEHEQALIAAIARLTDA. At Ser294 the chain carries Phosphoserine. A disordered region spans residues 294 to 313; that stretch reads SDYESDGEEPYSHELPMLLG.

As to quaternary structure, interacts with EDM2 in nucleus.

The protein localises to the nucleus. Functionally, probably involved in the regulation of chromatin states. Contributes to RPP7-mediated and basal immunity, especially against Hyaloperonospora arabidopsidis isolate Hiks1. Regulates negatively EDM2-dependent floral transition. The polypeptide is Protein EMSY-LIKE 2 (Arabidopsis thaliana (Mouse-ear cress)).